We begin with the raw amino-acid sequence, 227 residues long: UPF0173 metal-dependent hydrolase BT9727_4343 (227 aa).

It belongs to the UPF0173 family.

The sequence is that of UPF0173 metal-dependent hydrolase BT9727_4343 from Bacillus thuringiensis subsp. konkukian (strain 97-27).